Reading from the N-terminus, the 347-residue chain is Methylthioribose-1-phosphate isomerase (347 aa).

Residues 45–47, Arg88, and Gln197 each bind substrate; that span reads RGA. Asp238 serves as the catalytic Proton donor. 248 to 249 provides a ligand contact to substrate; the sequence is NK.

The protein belongs to the eIF-2B alpha/beta/delta subunits family. MtnA subfamily.

The enzyme catalyses 5-(methylsulfanyl)-alpha-D-ribose 1-phosphate = 5-(methylsulfanyl)-D-ribulose 1-phosphate. Its pathway is amino-acid biosynthesis; L-methionine biosynthesis via salvage pathway; L-methionine from S-methyl-5-thio-alpha-D-ribose 1-phosphate: step 1/6. In terms of biological role, catalyzes the interconversion of methylthioribose-1-phosphate (MTR-1-P) into methylthioribulose-1-phosphate (MTRu-1-P). In Nostoc sp. (strain PCC 7120 / SAG 25.82 / UTEX 2576), this protein is Methylthioribose-1-phosphate isomerase.